A 435-amino-acid polypeptide reads, in one-letter code: Glutamyl-tRNA reductase (435 aa).

Substrate-binding positions include 49–52 (TCNR), serine 109, 114–116 (EGQ), and glutamine 120. Cysteine 50 serves as the catalytic Nucleophile. NADP(+) is bound at residue 198–203 (GAGRMS).

This sequence belongs to the glutamyl-tRNA reductase family. As to quaternary structure, homodimer.

It carries out the reaction (S)-4-amino-5-oxopentanoate + tRNA(Glu) + NADP(+) = L-glutamyl-tRNA(Glu) + NADPH + H(+). Its pathway is porphyrin-containing compound metabolism; protoporphyrin-IX biosynthesis; 5-aminolevulinate from L-glutamyl-tRNA(Glu): step 1/2. It participates in porphyrin-containing compound metabolism; chlorophyll biosynthesis. Catalyzes the NADPH-dependent reduction of glutamyl-tRNA(Glu) to glutamate 1-semialdehyde (GSA). The protein is Glutamyl-tRNA reductase of Prochlorococcus marinus (strain MIT 9211).